Reading from the N-terminus, the 199-residue chain is TATA-box-binding protein (199 aa).

2 repeat units span residues 10–86 (IENI…VKLL) and 101–177 (IQNI…YNQL).

Belongs to the TBP family.

Its function is as follows. General factor that plays a role in the activation of archaeal genes transcribed by RNA polymerase. Binds specifically to the TATA box promoter element which lies close to the position of transcription initiation. The sequence is that of TATA-box-binding protein from Pyrobaculum calidifontis (strain DSM 21063 / JCM 11548 / VA1).